Here is a 25-residue protein sequence, read N- to C-terminus: Xenoposin precursor fragment BM1 (25 aa).

Expressed by the skin glands.

Its subcellular location is the secreted. Its function is as follows. Antimicrobial peptide. This is Xenoposin precursor fragment BM1 from Xenopus boumbaensis (Mawa clawed frog).